Consider the following 403-residue polypeptide: Tubby-like F-box protein 6 (403 aa).

The 56-residue stretch at 50 to 105 (SCWAQLPPELLREVLVRIEESEVWWPSRRDVVACAGVCRSWRGITKEIVRVPEASG) folds into the F-box domain.

It belongs to the TUB family. Ubiquitous.

This is Tubby-like F-box protein 6 (TULP6) from Oryza sativa subsp. japonica (Rice).